The following is a 371-amino-acid chain: 4-hydroxy-3-methylbut-2-en-1-yl diphosphate synthase (flavodoxin) (371 aa).

4 residues coordinate [4Fe-4S] cluster: Cys-270, Cys-273, Cys-305, and Glu-312.

Belongs to the IspG family. Requires [4Fe-4S] cluster as cofactor.

The catalysed reaction is (2E)-4-hydroxy-3-methylbut-2-enyl diphosphate + oxidized [flavodoxin] + H2O + 2 H(+) = 2-C-methyl-D-erythritol 2,4-cyclic diphosphate + reduced [flavodoxin]. The protein operates within isoprenoid biosynthesis; isopentenyl diphosphate biosynthesis via DXP pathway; isopentenyl diphosphate from 1-deoxy-D-xylulose 5-phosphate: step 5/6. Converts 2C-methyl-D-erythritol 2,4-cyclodiphosphate (ME-2,4cPP) into 1-hydroxy-2-methyl-2-(E)-butenyl 4-diphosphate. In Shewanella baltica (strain OS223), this protein is 4-hydroxy-3-methylbut-2-en-1-yl diphosphate synthase (flavodoxin).